A 186-amino-acid chain; its full sequence is ATP synthase subunit b' (186 aa).

A helical transmembrane segment spans residues 39-59 (IFWLLLALGAIYWLLKNIAIP).

This sequence belongs to the ATPase B chain family. F-type ATPases have 2 components, F(1) - the catalytic core - and F(0) - the membrane proton channel. F(1) has five subunits: alpha(3), beta(3), gamma(1), delta(1), epsilon(1). F(0) has four main subunits: a(1), b(1), b'(1) and c(10-14). The alpha and beta chains form an alternating ring which encloses part of the gamma chain. F(1) is attached to F(0) by a central stalk formed by the gamma and epsilon chains, while a peripheral stalk is formed by the delta, b and b' chains.

It is found in the cellular chromatophore membrane. In terms of biological role, f(1)F(0) ATP synthase produces ATP from ADP in the presence of a proton or sodium gradient. F-type ATPases consist of two structural domains, F(1) containing the extramembraneous catalytic core and F(0) containing the membrane proton channel, linked together by a central stalk and a peripheral stalk. During catalysis, ATP synthesis in the catalytic domain of F(1) is coupled via a rotary mechanism of the central stalk subunits to proton translocation. Component of the F(0) channel, it forms part of the peripheral stalk, linking F(1) to F(0). The b'-subunit is a diverged and duplicated form of b found in plants and photosynthetic bacteria. This chain is ATP synthase subunit b', found in Rhodobacter capsulatus (Rhodopseudomonas capsulata).